Here is a 196-residue protein sequence, read N- to C-terminus: GTP cyclohydrolase-2 (196 aa).

49-53 contributes to the GTP binding site; it reads RVHSE. Residues cysteine 54, cysteine 65, and cysteine 67 each coordinate Zn(2+). Residues glutamine 70, 92–94, and threonine 114 contribute to the GTP site; that span reads EGR. The Proton acceptor role is filled by aspartate 126. Arginine 128 serves as the catalytic Nucleophile. GTP is bound by residues threonine 149 and lysine 154.

This sequence belongs to the GTP cyclohydrolase II family. As to quaternary structure, homodimer. Zn(2+) serves as cofactor.

It catalyses the reaction GTP + 4 H2O = 2,5-diamino-6-hydroxy-4-(5-phosphoribosylamino)-pyrimidine + formate + 2 phosphate + 3 H(+). It participates in cofactor biosynthesis; riboflavin biosynthesis; 5-amino-6-(D-ribitylamino)uracil from GTP: step 1/4. Catalyzes the conversion of GTP to 2,5-diamino-6-ribosylamino-4(3H)-pyrimidinone 5'-phosphate (DARP), formate and pyrophosphate. The polypeptide is GTP cyclohydrolase-2 (Shigella boydii serotype 18 (strain CDC 3083-94 / BS512)).